An 89-amino-acid chain; its full sequence is Elongation factor 1-beta (89 aa).

The protein belongs to the EF-1-beta/EF-1-delta family.

Promotes the exchange of GDP for GTP in EF-1-alpha/GDP, thus allowing the regeneration of EF-1-alpha/GTP that could then be used to form the ternary complex EF-1-alpha/GTP/AAtRNA. This Methanococcus maripaludis (strain C5 / ATCC BAA-1333) protein is Elongation factor 1-beta.